The chain runs to 529 residues: uncharacterized protein (529 aa).

Residues 26-58 (CDSCRKQKTRCLAGSVEDENRACLRCRSLNMDC) constitute a DNA-binding region (zn(2)-C6 fungal-type).

The protein localises to the nucleus. This is an uncharacterized protein from Schizosaccharomyces pombe (strain 972 / ATCC 24843) (Fission yeast).